Here is a 439-residue protein sequence, read N- to C-terminus: Ribosomal protein uS12 methylthiotransferase RimO (439 aa).

An MTTase N-terminal domain is found at 7 to 119 (KQLCLISLGC…IDIMIAKKQN (113 aa)). Residues Cys16, Cys50, Cys82, Cys151, Cys155, and Cys158 each coordinate [4Fe-4S] cluster. Positions 137–368 (TGSSVHAYVK…ALKHQNHSFK (232 aa)) constitute a Radical SAM core domain.

Belongs to the methylthiotransferase family. RimO subfamily. The cofactor is [4Fe-4S] cluster.

The protein resides in the cytoplasm. The catalysed reaction is L-aspartate(89)-[ribosomal protein uS12]-hydrogen + (sulfur carrier)-SH + AH2 + 2 S-adenosyl-L-methionine = 3-methylsulfanyl-L-aspartate(89)-[ribosomal protein uS12]-hydrogen + (sulfur carrier)-H + 5'-deoxyadenosine + L-methionine + A + S-adenosyl-L-homocysteine + 2 H(+). Catalyzes the methylthiolation of an aspartic acid residue of ribosomal protein uS12. The polypeptide is Ribosomal protein uS12 methylthiotransferase RimO (Helicobacter pylori (strain P12)).